The following is a 339-amino-acid chain: DNA-directed RNA polymerase subunit alpha (339 aa).

Residues 1–233 (MVREEVAGST…DLFLPFLHAE (233 aa)) form an alpha N-terminal domain (alpha-NTD) region. Positions 264–339 (KKGIPLNCIF…IDLLKNKLSF (76 aa)) are alpha C-terminal domain (alpha-CTD).

The protein belongs to the RNA polymerase alpha chain family. As to quaternary structure, in plastids the minimal PEP RNA polymerase catalytic core is composed of four subunits: alpha, beta, beta', and beta''. When a (nuclear-encoded) sigma factor is associated with the core the holoenzyme is formed, which can initiate transcription.

It localises to the plastid. The protein localises to the chloroplast. It carries out the reaction RNA(n) + a ribonucleoside 5'-triphosphate = RNA(n+1) + diphosphate. Functionally, DNA-dependent RNA polymerase catalyzes the transcription of DNA into RNA using the four ribonucleoside triphosphates as substrates. The protein is DNA-directed RNA polymerase subunit alpha of Psathyrostachys fragilis (Russian wild rye).